The sequence spans 397 residues: 4-hydroxybenzoate polyprenyltransferase, mitochondrial (397 aa).

The transit peptide at 1–14 directs the protein to the mitochondrion; it reads MFAVRHLLKSRKHF. Transmembrane regions (helical) follow at residues 96 to 116, 121 to 141, 169 to 189, 190 to 210, 213 to 233, 242 to 262, 289 to 309, 313 to 333, and 345 to 365; these read IGTYLLFWPCAWSIALSADAG, LTMLGLFGTGALIMRGAGCTI, FDAIVFLSAQLSLGLLVLVQL, NWQSILLGASSLGLVITYPLM, VTYWPQLVLGMAFNWGALLGW, LAACLPLYLSGVCWTIVYDTI, VWLSGFTAAMLTGLSTAGWAC, LPYYAAVGVVGAHLVQQIYSL, and FLSNHQVGLILFLGIVLGTLL.

It belongs to the UbiA prenyltransferase family. The cofactor is Mg(2+).

Its subcellular location is the mitochondrion inner membrane. The catalysed reaction is an all-trans-polyprenyl diphosphate + 4-hydroxybenzoate = a 4-hydroxy-3-(all-trans-polyprenyl)benzoate + diphosphate. It participates in cofactor biosynthesis; ubiquinone biosynthesis. In terms of biological role, catalyzes the prenylation of para-hydroxybenzoate (PHB) with an all-trans polyprenyl group. Mediates the second step in the final reaction sequence of coenzyme Q (CoQ) biosynthesis, which is the condensation of the polyisoprenoid side chain with PHB, generating the first membrane-bound Q intermediate. The chain is 4-hydroxybenzoate polyprenyltransferase, mitochondrial from Drosophila pseudoobscura pseudoobscura (Fruit fly).